Here is a 335-residue protein sequence, read N- to C-terminus: Phosphate acyltransferase (335 aa).

It belongs to the PlsX family. Homodimer. Probably interacts with PlsY.

The protein resides in the cytoplasm. The enzyme catalyses a fatty acyl-[ACP] + phosphate = an acyl phosphate + holo-[ACP]. It participates in lipid metabolism; phospholipid metabolism. In terms of biological role, catalyzes the reversible formation of acyl-phosphate (acyl-PO(4)) from acyl-[acyl-carrier-protein] (acyl-ACP). This enzyme utilizes acyl-ACP as fatty acyl donor, but not acyl-CoA. This Streptococcus equi subsp. equi (strain 4047) protein is Phosphate acyltransferase.